A 210-amino-acid polypeptide reads, in one-letter code: Tetraspanin-31 (210 aa).

At 1 to 12 (MVCGGFACSRNA) the chain is on the cytoplasmic side. The chain crosses the membrane as a helical span at residues 13–33 (LCALNVVYMLVGFLLIGVAAW). Residues 34-44 (GKGLGVVSSIH) are Extracellular-facing. A helical membrane pass occupies residues 45–65 (IIGGVIAVGVFLLLIAVAGLV). At 66–72 (GAANHHQ) the chain is on the cytoplasmic side. The helical transmembrane segment at 73–93 (VLLFFYMIILGLVFIFQFGIS) threads the bilayer. Topologically, residues 94–173 (CSCLAINRNT…FLKHSDKALK (80 aa)) are extracellular. N-linked (GlcNAc...) asparagine glycosylation is found at N109, N117, and N134. A helical membrane pass occupies residues 174 to 194 (ILGGVGLFFSFTEILGVWLAM). Residues 195–210 (RFRNQKDPRANPSAFL) are Cytoplasmic-facing.

Belongs to the tetraspanin (TM4SF) family.

Its subcellular location is the membrane. This Mus musculus (Mouse) protein is Tetraspanin-31 (Tspan31).